We begin with the raw amino-acid sequence, 85 residues long: uncharacterized protein (85 aa).

This is an uncharacterized protein from Saccharomyces cerevisiae (strain ATCC 204508 / S288c) (Baker's yeast).